A 143-amino-acid chain; its full sequence is Nucleoside diphosphate kinase (143 aa).

Positions 11, 59, 87, 93, 104, and 114 each coordinate ATP. H117 (pros-phosphohistidine intermediate) is an active-site residue.

The protein belongs to the NDK family. Homotetramer. Mg(2+) is required as a cofactor.

The protein resides in the cytoplasm. The catalysed reaction is a 2'-deoxyribonucleoside 5'-diphosphate + ATP = a 2'-deoxyribonucleoside 5'-triphosphate + ADP. It carries out the reaction a ribonucleoside 5'-diphosphate + ATP = a ribonucleoside 5'-triphosphate + ADP. Major role in the synthesis of nucleoside triphosphates other than ATP. The ATP gamma phosphate is transferred to the NDP beta phosphate via a ping-pong mechanism, using a phosphorylated active-site intermediate. The sequence is that of Nucleoside diphosphate kinase from Shewanella baltica (strain OS223).